Reading from the N-terminus, the 332-residue chain is 2,3-diketo-L-gulonate reductase (332 aa).

His44 serves as the catalytic Proton donor. NAD(+) contacts are provided by residues 168–174 (ITMVDMS), 224–225 (WK), and 304–306 (GHE).

The protein belongs to the LDH2/MDH2 oxidoreductase family. DlgD subfamily. As to quaternary structure, homodimer.

The protein localises to the cytoplasm. The enzyme catalyses 3-dehydro-L-gulonate + NAD(+) = 2,3-dioxo-L-gulonate + NADH + H(+). It catalyses the reaction 3-dehydro-L-gulonate + NADP(+) = 2,3-dioxo-L-gulonate + NADPH + H(+). Catalyzes the reduction of 2,3-diketo-L-gulonate in the presence of NADH, to form 3-keto-L-gulonate. The sequence is that of 2,3-diketo-L-gulonate reductase from Pasteurella multocida (strain Pm70).